A 415-amino-acid polypeptide reads, in one-letter code: Gamma-glutamyl phosphate reductase (415 aa).

This sequence belongs to the gamma-glutamyl phosphate reductase family.

Its subcellular location is the cytoplasm. It catalyses the reaction L-glutamate 5-semialdehyde + phosphate + NADP(+) = L-glutamyl 5-phosphate + NADPH + H(+). It participates in amino-acid biosynthesis; L-proline biosynthesis; L-glutamate 5-semialdehyde from L-glutamate: step 2/2. Functionally, catalyzes the NADPH-dependent reduction of L-glutamate 5-phosphate into L-glutamate 5-semialdehyde and phosphate. The product spontaneously undergoes cyclization to form 1-pyrroline-5-carboxylate. This chain is Gamma-glutamyl phosphate reductase, found in Dictyoglomus thermophilum (strain ATCC 35947 / DSM 3960 / H-6-12).